A 425-amino-acid polypeptide reads, in one-letter code: Glutamyl-tRNA reductase (425 aa).

Substrate-binding positions include 49 to 52 (TCNR), Ser109, 114 to 116 (EGQ), and Gln120. Cys50 serves as the catalytic Nucleophile. 189 to 194 (GAGETG) contacts NADP(+).

It belongs to the glutamyl-tRNA reductase family. In terms of assembly, homodimer.

The enzyme catalyses (S)-4-amino-5-oxopentanoate + tRNA(Glu) + NADP(+) = L-glutamyl-tRNA(Glu) + NADPH + H(+). Its pathway is porphyrin-containing compound metabolism; protoporphyrin-IX biosynthesis; 5-aminolevulinate from L-glutamyl-tRNA(Glu): step 1/2. It functions in the pathway porphyrin-containing compound metabolism; chlorophyll biosynthesis. Catalyzes the NADPH-dependent reduction of glutamyl-tRNA(Glu) to glutamate 1-semialdehyde (GSA). This chain is Glutamyl-tRNA reductase, found in Pelodictyon phaeoclathratiforme (strain DSM 5477 / BU-1).